We begin with the raw amino-acid sequence, 122 residues long: Proximal tubules-expressed gene protein (122 aa).

A helical membrane pass occupies residues 33-53; it reads WLTGLIAMTVFLFLVLVVYVA.

Belongs to the PDZK1-interacting protein 1/SMIM24 family. Expressed in prospective pronephric mesoderm at the late gastrula stage. After neurulation, expressed in the intermediate mesoderm, eye placode and blood islands. Expression becomes restricted to the pronephric proximal tubule during embryogenesis, but is absent from the connecting tubules.

Its subcellular location is the membrane. Its function is as follows. Essential for pronephric tubule development, acting upstream of pax8 and lhx1/lim1 and downstream of retinoic acid signaling to induce pronephric mesoderm to form pronephric tubule-specific cells. The protein is Proximal tubules-expressed gene protein (pteg) of Xenopus laevis (African clawed frog).